The primary structure comprises 754 residues: Subtilisin-like protease SBT3.12 (754 aa).

The signal sequence occupies residues 1-28 (MGIVKGRSRAGLFIGFLFIVNVGFCVFA). The propeptide at 29–117 (QESSNEERKI…VAPNRKVELQ (89 aa)) is activation peptide. The region spanning 39–116 (YVVHLGVRRH…SVAPNRKVEL (78 aa)) is the Inhibitor I9 domain. The Peptidase S8 domain maps to 121-606 (IYDYLGLSPS…AGLVNAERAK (486 aa)). The Charge relay system role is filled by aspartate 151. A glycan (N-linked (GlcNAc...) asparagine) is linked at asparagine 206. Residue histidine 224 is the Charge relay system of the active site. N-linked (GlcNAc...) asparagine glycosylation is found at asparagine 239 and asparagine 369. The active-site Charge relay system is serine 537. 2 N-linked (GlcNAc...) asparagine glycosylation sites follow: asparagine 629 and asparagine 740.

It belongs to the peptidase S8 family.

It is found in the secreted. This chain is Subtilisin-like protease SBT3.12, found in Arabidopsis thaliana (Mouse-ear cress).